A 274-amino-acid chain; its full sequence is 2,3,4,5-tetrahydropyridine-2,6-dicarboxylate N-succinyltransferase (274 aa).

The protein belongs to the transferase hexapeptide repeat family.

The protein resides in the cytoplasm. The catalysed reaction is (S)-2,3,4,5-tetrahydrodipicolinate + succinyl-CoA + H2O = (S)-2-succinylamino-6-oxoheptanedioate + CoA. It participates in amino-acid biosynthesis; L-lysine biosynthesis via DAP pathway; LL-2,6-diaminopimelate from (S)-tetrahydrodipicolinate (succinylase route): step 1/3. This Shigella boydii serotype 18 (strain CDC 3083-94 / BS512) protein is 2,3,4,5-tetrahydropyridine-2,6-dicarboxylate N-succinyltransferase.